Consider the following 96-residue polypeptide: Large ribosomal subunit protein bL28 (96 aa).

The protein belongs to the bacterial ribosomal protein bL28 family.

The chain is Large ribosomal subunit protein bL28 from Agrobacterium fabrum (strain C58 / ATCC 33970) (Agrobacterium tumefaciens (strain C58)).